A 256-amino-acid polypeptide reads, in one-letter code: Homeobox-leucine zipper protein HOX18 (256 aa).

The tract at residues 52–117 is disordered; it reads YDHGRDEEQA…GGGGGTRKKL (66 aa). A compositionally biased stretch (gly residues) spans 102–112; it reads DGGSGSGGGGG. The segment at residues 112-171 is a DNA-binding region (homeobox); the sequence is GTRKKLQLTKEQSTLLEDSFRVHNILSHAQKHELARQLKLKPRQVEVWFQNRRARTKLKQ. The interval 170 to 214 is leucine-zipper; that stretch reads KQTEVDCEFLKRCCESLTEENKQLKHELMELRRLASAAAAAAGSQ.

The protein belongs to the HD-ZIP homeobox family. Class II subfamily. In terms of tissue distribution, expressed in roots, leaf sheaths and blades and panicles.

Its subcellular location is the nucleus. Its function is as follows. Probable transcription factor. This is Homeobox-leucine zipper protein HOX18 (HOX18) from Oryza sativa subsp. indica (Rice).